The following is a 185-amino-acid chain: Biofilm operon icaADBC HTH-type negative transcriptional regulator IcaR (185 aa).

Residues 1–59 (MKDKIIDNAITLFSEKGYDGTTLDDISKSVNIKKASLYYHYDNKEEIYRKSVENCFNYF) enclose the HTH tetR-type domain. Positions 22–41 (TLDDISKSVNIKKASLYYHY) form a DNA-binding region, H-T-H motif.

In terms of assembly, homodimer.

In terms of biological role, represses transcription of the icaADBC operon necessary for biofilm production. This Staphylococcus epidermidis (strain ATCC 35984 / DSM 28319 / BCRC 17069 / CCUG 31568 / BM 3577 / RP62A) protein is Biofilm operon icaADBC HTH-type negative transcriptional regulator IcaR (icaR).